We begin with the raw amino-acid sequence, 371 residues long: Putative phosphoserine aminotransferase (371 aa).

R45 serves as a coordination point for L-glutamate. Positions 103, 149, 171, and 194 each coordinate pyridoxal 5'-phosphate. K195 is subject to N6-(pyridoxal phosphate)lysine. 246 to 247 (NT) is a pyridoxal 5'-phosphate binding site.

The protein belongs to the class-V pyridoxal-phosphate-dependent aminotransferase family. SerC subfamily. As to quaternary structure, homodimer. Pyridoxal 5'-phosphate is required as a cofactor.

The protein resides in the cytoplasm. It carries out the reaction O-phospho-L-serine + 2-oxoglutarate = 3-phosphooxypyruvate + L-glutamate. The catalysed reaction is 4-(phosphooxy)-L-threonine + 2-oxoglutarate = (R)-3-hydroxy-2-oxo-4-phosphooxybutanoate + L-glutamate. It participates in amino-acid biosynthesis; L-serine biosynthesis; L-serine from 3-phospho-D-glycerate: step 2/3. It functions in the pathway cofactor biosynthesis; pyridoxine 5'-phosphate biosynthesis; pyridoxine 5'-phosphate from D-erythrose 4-phosphate: step 3/5. In terms of biological role, catalyzes the reversible conversion of 3-phosphohydroxypyruvate to phosphoserine and of 3-hydroxy-2-oxo-4-phosphonooxybutanoate to phosphohydroxythreonine. In Mycolicibacterium vanbaalenii (strain DSM 7251 / JCM 13017 / BCRC 16820 / KCTC 9966 / NRRL B-24157 / PYR-1) (Mycobacterium vanbaalenii), this protein is Putative phosphoserine aminotransferase.